A 96-amino-acid polypeptide reads, in one-letter code: MITIPTEVKILEETDNLIKVQFKGETHTLFNALKEIAYTINGVKKAAYFIEHPLKDNNYFIIETDGSIKARDALIQALKKLKEELLNFKDWYYSNL.

Belongs to the archaeal Rpo11/eukaryotic RPB11/RPC19 RNA polymerase subunit family. As to quaternary structure, part of the RNA polymerase complex.

The protein resides in the cytoplasm. The catalysed reaction is RNA(n) + a ribonucleoside 5'-triphosphate = RNA(n+1) + diphosphate. Functionally, DNA-dependent RNA polymerase (RNAP) catalyzes the transcription of DNA into RNA using the four ribonucleoside triphosphates as substrates. The protein is DNA-directed RNA polymerase subunit Rpo11 of Nanoarchaeum equitans (strain Kin4-M).